Consider the following 696-residue polypeptide: DNA topoisomerase 6 subunit B (696 aa).

Positions Met1–Lys36 are disordered. The segment covering Ala20–Lys36 has biased composition (low complexity). ATP contacts are provided by residues Asn88, Asp187, Thr208–Lys209, Gly217–Lys224, and Lys543.

It belongs to the TOP6B family. Homodimer. Heterotetramer of two TOP6A and two TOP6B subunits. Interacts with SPO11-4.

It localises to the nucleus. The enzyme catalyses ATP-dependent breakage, passage and rejoining of double-stranded DNA.. Functionally, component of the DNA topoisomerase VI involved in chromatin organization and progression of endoreduplication cycles. Relaxes both positive and negative superturns and exhibits a strong decatenase activity. The B subunit binds ATP. The sequence is that of DNA topoisomerase 6 subunit B (TOP6B) from Oryza sativa subsp. japonica (Rice).